Reading from the N-terminus, the 108-residue chain is Glutaredoxin-C10 (108 aa).

The Glutaredoxin domain maps to 1 to 107 (MERVAKLASE…PMLKNAGALW (107 aa)). Cysteine 21 and cysteine 24 are oxidised to a cystine. Positions 105–108 (ALWL) match the Responsive for interaction with TGA factors motif.

It belongs to the glutaredoxin family. CC-type subfamily.

The protein resides in the cytoplasm. It is found in the nucleus. Has a glutathione-disulfide oxidoreductase activity in the presence of NADPH and glutathione reductase. Reduces low molecular weight disulfides and proteins. The sequence is that of Glutaredoxin-C10 (GRXC10) from Oryza sativa subsp. japonica (Rice).